Here is a 186-residue protein sequence, read N- to C-terminus: ATP synthase subunit delta (186 aa).

The protein belongs to the ATPase delta chain family. In terms of assembly, F-type ATPases have 2 components, F(1) - the catalytic core - and F(0) - the membrane proton channel. F(1) has five subunits: alpha(3), beta(3), gamma(1), delta(1), epsilon(1). CF(0) has four main subunits: a(1), b(1), b'(1) and c(10-14). The alpha and beta chains form an alternating ring which encloses part of the gamma chain. F(1) is attached to F(0) by a central stalk formed by the gamma and epsilon chains, while a peripheral stalk is formed by the delta, b and b' chains.

The protein localises to the cell inner membrane. F(1)F(0) ATP synthase produces ATP from ADP in the presence of a proton or sodium gradient. F-type ATPases consist of two structural domains, F(1) containing the extramembraneous catalytic core and F(0) containing the membrane proton channel, linked together by a central stalk and a peripheral stalk. During catalysis, ATP synthesis in the catalytic domain of F(1) is coupled via a rotary mechanism of the central stalk subunits to proton translocation. Functionally, this protein is part of the stalk that links CF(0) to CF(1). It either transmits conformational changes from CF(0) to CF(1) or is implicated in proton conduction. The protein is ATP synthase subunit delta of Rhodospirillum centenum (strain ATCC 51521 / SW).